A 201-amino-acid polypeptide reads, in one-letter code: tRNA (guanine-N(7)-)-methyltransferase (201 aa).

Glu-33, Glu-58, Asp-85, and Asp-106 together coordinate S-adenosyl-L-methionine. Asp-106 is a catalytic residue. Substrate contacts are provided by residues Lys-110, Asp-142, and 180–183 (TTYE).

The protein belongs to the class I-like SAM-binding methyltransferase superfamily. TrmB family.

The enzyme catalyses guanosine(46) in tRNA + S-adenosyl-L-methionine = N(7)-methylguanosine(46) in tRNA + S-adenosyl-L-homocysteine. The protein operates within tRNA modification; N(7)-methylguanine-tRNA biosynthesis. In terms of biological role, catalyzes the formation of N(7)-methylguanine at position 46 (m7G46) in tRNA. In Mesomycoplasma hyopneumoniae (strain 232) (Mycoplasma hyopneumoniae), this protein is tRNA (guanine-N(7)-)-methyltransferase.